The chain runs to 631 residues: MGKVIGIDLGTTNSCVAVMEGKEPKVIENSEGERTTPSIIAFANGEKLVGQSAKRQAVTNPRNTVYAVKRLIGRNFTDPMVKKDQEIVPYNIVKADNGDAWVEVEGKKHSPSQISAFILQKMKETAENYLGEKVTQAVITVPAYFNDAQRQATKDAGKIAGLEVLRIINEPTAAALAYGFDKSASKTIAVYDLGGGTFDVSILEIGDGVFEVKSTNGDTFLGGEDFDTRILEHLINTFKKESGIDLRNDPLALQRLKEAAEKAKKELSSALTTDINLPYITADNSGPKHLNIKFTRAELEKLVDDLIEKTIEPCRKALKDAGLKASDIQEVVLVGGMTRMPKVQEAVEKFFGRALHKGVNPDEVVALGAAIQGGVLNKEVTDILLLDVTPLSLGIETLGGVFTRLIDRNTTIPSKKSQVFSTADDNQHAVTIRVFQGEREMAKDNKMLGQFNLEGIPPAPRGVPQIEVTFDIDANGIVHVSAKDKASGKEQRVTIQASGGLSDAEIEQMVKDAEKNADEDKKHKELIEAKNAADSLIYSTEKTLTDYSDKLSSEDKGGVEEALSALKAVLDSEDASLIKEKTESLTAASMKIGEAMYKAQSDAGAAGSASEENTTSNEKVVDADFEDVEKK.

Phosphothreonine; by autocatalysis is present on T197. A disordered region spans residues 599–631 (AQSDAGAAGSASEENTTSNEKVVDADFEDVEKK). Residues 603 to 612 (AGAAGSASEE) are compositionally biased toward low complexity.

It belongs to the heat shock protein 70 family.

In terms of biological role, acts as a chaperone. The protein is Chaperone protein DnaK of Rickettsia bellii (strain RML369-C).